We begin with the raw amino-acid sequence, 704 residues long: MAKITKTFQYGKHTVTLETGEVARQASGAVIVKMDDTVLLVTAVAAKTAREGQDFFPLTVDYQEKFYAGGRIPGGFFKREGRATEKETLISRLIDRPIRPLFPEDYKNEVQIIATVMSMNPDIDGDIAALIGASAALSLAGTPFNGPIGAAKVGYKNGEYILNPTITELKDSQLELVVAGTANAVLMVESEAALLSEEVMLGAVTFGHREMQKVINIINELTVEAGTKPSTWVAPAKNTALISALKEAVGTQLAGAFQVRDKLQRRDAISAIKKDVLESLAGRVASEGWSSAELSKEFGELEYHTMRDSVLETKVRIDGRALDTVRPISVQAGVLPRTHGSALFTRGETQAIVVTTLGTARDGQVIDAVAGEYKENFLFHYNFPPYSVGECGRFGAPKRREIGHGRLAKRGVLAVMPSLEEFPYTIRVVSEITESNGSSSMASVCGSSLALMDAGVPVKAPVAGIAMGLVKEDDRFVVLSDILGDEDHLGDMDFKVAGTAEGVSALQMDIKIEGITEEIMKQALQQAKAGRLHILGEMSKALTTPRQELSDYAPRLLTIKIHPDKIREVIGKGGSTIQAITKETGTQIDIQDDGTIIIASVNAIAAQAAKSRIEQITSDVEPGRIYEGKVAKIMDFGAFVTILPGKDGLVHVSQISSERVEKVGDKLKEGDLVRVKVLEVDKQGRIRLSIKAVEEGEGVPASAE.

Mg(2+)-binding residues include Asp487 and Asp493. The 60-residue stretch at 554–613 (PRLLTIKIHPDKIREVIGKGGSTIQAITKETGTQIDIQDDGTIIIASVNAIAAQAAKSRI) folds into the KH domain. In terms of domain architecture, S1 motif spans 623 to 691 (GRIYEGKVAK…KQGRIRLSIK (69 aa)).

This sequence belongs to the polyribonucleotide nucleotidyltransferase family. As to quaternary structure, component of the RNA degradosome, which is a multiprotein complex involved in RNA processing and mRNA degradation. It depends on Mg(2+) as a cofactor.

It is found in the cytoplasm. The enzyme catalyses RNA(n+1) + phosphate = RNA(n) + a ribonucleoside 5'-diphosphate. In terms of biological role, involved in mRNA degradation. Catalyzes the phosphorolysis of single-stranded polyribonucleotides processively in the 3'- to 5'-direction. This Xanthomonas campestris pv. campestris (strain 8004) protein is Polyribonucleotide nucleotidyltransferase.